The sequence spans 63 residues: Large ribosomal subunit protein uL29 (63 aa).

Belongs to the universal ribosomal protein uL29 family.

The chain is Large ribosomal subunit protein uL29 from Azotobacter vinelandii (strain DJ / ATCC BAA-1303).